The primary structure comprises 218 residues: Thiopurine S-methyltransferase (218 aa).

W10, L45, E66, and R123 together coordinate S-adenosyl-L-methionine.

The protein belongs to the class I-like SAM-binding methyltransferase superfamily. TPMT family.

It localises to the cytoplasm. The enzyme catalyses S-adenosyl-L-methionine + a thiopurine = S-adenosyl-L-homocysteine + a thiopurine S-methylether.. This is Thiopurine S-methyltransferase from Pseudomonas aeruginosa (strain ATCC 15692 / DSM 22644 / CIP 104116 / JCM 14847 / LMG 12228 / 1C / PRS 101 / PAO1).